The sequence spans 448 residues: MNQPLNVAPPVSSELNLRAHWMPFSANRNFQKDPRIIVAAEGSWLTDDKGRKVYDSLSGLWTCGAGHSRKEIQEAVARQLGTLDYSPGFQYGHPLSFQLAEKIAGLLPGELNHVFFTGSGSECADTSIKMARAYWRLKGQPQKTKLIGRARGYHGVNVAGTSLGGIGGNRKMFGQLMDVDHLPHTLQPGMAFTRGMAQTGGVELANELLKLIELHDASNIAAVIVEPMSGSAGVLVPPVGYLQRLREICDQHNILLIFDEVITAFGRLGTYSGAEYFGVTPDLMNVAKQVTNGAVPMGAVIASSEIYDTFMNQALPEHAVEFSHGYTYSAHPVACAAGLAALDILARDNLVQQSAELAPHFEKGLHGLQGAKNVIDIRNCGLAGAIQIAPRDGDPTVRPFEAGMKLWQQGFYVRFGGDTLQFGPTFNARPEELDRLFDAVGEALNGIA.

W61 is a substrate binding site. 120–121 contacts pyridoxal 5'-phosphate; sequence GS. Residue K288 is modified to N6-(pyridoxal phosphate)lysine. T327 is a pyridoxal 5'-phosphate binding site. Positions 414 and 421 each coordinate substrate.

The protein belongs to the class-III pyridoxal-phosphate-dependent aminotransferase family. In terms of assembly, homotetramer. Pyridoxal 5'-phosphate serves as cofactor.

It catalyses the reaction 3-oxopropanoate + L-alanine = beta-alanine + pyruvate. Its activity is regulated as follows. Inhibited by gabaculine (5-amino-1,3-cyclohexadienylcarboxylic acid). Its function is as follows. Involved in the degradation of beta-alanine. Catalyzes the transfer of the amino group from beta-alanine to pyruvate to yield L-alanine and 3-oxopropanoate. It can also accept both 4-aminobutyrate and (S)-alpha-methylbenzylamine (MBA) as amino-group donors in the presence of pyruvate as an amine acceptor. The protein is Beta-alanine--pyruvate aminotransferase (bauA) of Pseudomonas aeruginosa (strain ATCC 15692 / DSM 22644 / CIP 104116 / JCM 14847 / LMG 12228 / 1C / PRS 101 / PAO1).